A 1914-amino-acid chain; its full sequence is MAQSDVAAVWNPALRSDDNATPVPTGPASLEIDTSIEATTIPLGSPMETPHEYSISDIAFPDSDTAAPPQEAASPDMIDTEPLPNPDQIPARDEVLEAPSADVEATPEISYDHETPNLDAPQTEHAHDNEAMPLDDPEDQVTEAQPAQPQAEDSISTEATAAQDMDVEEQSSTPHAGDQDGTEPADTNGEAHSSHDIWGSPAKENSAEDDFFNQLKTQTKPIYVPPENESRFEEGVPLLDDSAESPVEPTATQEGQIDNLFTDDNDEDDGFFKAVQSSPPPDKSQPASHITRKSTFQVMDSLGFSLDSPMSDADPAAQEFDNALAAATTNNSVGISAFEEDPAAQEFDNVLAAAATDNSADKPSSEEDPAAQELDNVLAAATTNNSVGISAFEEDPAAQEFDNVLAAAATDNTVRKSSSEEDLAARWQAELAEEEAEVAPSEDDLAARWQMELDDDDDLLLEDDIGGATAEHAPTSQNINGATAGAAVPGLSSPFGTPQSSVRPGAPATAYTPHQPSTSDLLQGVPVPGAAPPANMAASADYFTQPPRPNVTANKAESFAERAKEGYRSPYDLPEDLTRPRRPVASHKPVVTQPGSTPPPPRSNSIPIPPPSTSMPPPPLGAQPDGAQSTAKVAAPKNFYEELPLPPPRPQSRPASSGRYTPGANAMPPASSHPPPPPANPYASLSTAPPAAAEAYSQPQVQQPEGLDPYASLSAPGASSGPAPPSATSRYSPKPPTLQAGIKPPPSPRYSPAPPPATAPPPRNRYASQPTAPPSQGVALPFQPRTSSPLAYHEKVSYRPQEPSEQQPSAMEQPAIIPPIEVQSQPTAPAEYSPIQPPEVPHVPEAVNMGSSVHQMSQQPMSPPRNQYAPPGYVDEFSKRIAPIANVPPAPVLPADDPTFVPPRRSMTQSPSQQTLGPRLSVPSVDPLQRPASVHGAGSPTKAVNPYAPAQMSAHNRVASQSLEFIPPTDDQQFDPLERWKGAPIVKFGFGGSVLSCFPKHIPRYSAGQATPKIKSTPGEVKTHQLSDWIPVPDTIARHPGPLKSKSKKKDLLAWLSSKIAAFENEGIPQAVYMHADSQKRSEEKILLWKVVRVLVEHDGVLEGSPEIQKSLRQIIFPHLQDVDSAQPYGNGLPSFSTAQSLDAPSRPDAADPQAVESIRNNLLVGEREKAVWGAVDHRLWGHAMIIASTMDKSVWKQVVQEFVRREVRSASGNTESLAALYEIFAGNVEESVDELVPPSARAGLQMVSKVDGHGTSKNALDGLDSWRDTLGLVLSNRSSEDYQALLALGRLLQSYGRTEAAHICFIFSRAAVFGGVDDPQASVVLLGADHQHLSLAALQDEDSILLTEAYEYATSVLSASPKPPLPHLLAFKLVYAWSLADQGRKSEAQQYCDAIAATLKATTKPSPYQHQHLYFGVDELSARLRQTTSDGGSSWISRPSMEKVSGSMWAKFNSFVAGEDNEAGSAGSAKAGDGDIGPFAKIAGTPTVSRSPSVSDIYGSYSAQPSYSSGPSRYQPNNQYAPTSSPEQLRGRSSLDSQRSSSYGFGFGQRRGSQEPSTPVESNMYQGGMLYNSPPAVGYQSTPPQTSYMPLAPVKEDLAPQAHAEASAGPVEQSYGSGSPYQPAGYGSFDQPFMNQVPSDGAGYMPPGVSSGYEPPAIESHPEPVAAPSEEVNEEEPAKKKSFMDDDDDDDIAARAAAIQKAERARKDREADEAFRKAAEADAQKPAPAKKSWFGGWFGGAAGGKKEDLNPNKPIRAKLGEENSFYYDKDLKKWVNKKDPNSATAARATPPPPRASGPPSRTASGSSAAPPPPASASPMMPPPSSRPPSTTGMPPPGSPAPSSLGVPPPSIQRSVSTGAAVSTPPSGLAAPPRPATSLSNASSIDDLLGAPTARKGAAAKGKKKGRYVDVMAK.

2 disordered regions span residues 1–31 (MAQS…ASLE) and 58–294 (IAFP…TRKS). Positions 110 to 130 (SYDHETPNLDAPQTEHAHDNE) are enriched in basic and acidic residues. Composition is skewed to polar residues over residues 142 to 160 (TEAQ…TEAT) and 285 to 294 (QPASHITRKS). 4 consecutive repeat copies span residues 315–341 (PAAQ…FEED), 342–368 (PAAQ…SEED), 369–395 (PAAQ…FEED), and 396–422 (PAAQ…SEED). The segment at 315-422 (PAAQEFDNAL…TVRKSSSEED (108 aa)) is 4 X 27 AA approximate tandem repeats. Residues 352 to 376 (AAAATDNSADKPSSEEDPAAQELDN) are disordered. Disordered stretches follow at residues 469-873 (TAEH…PPGY), 1506-1568 (PSYS…MYQG), 1600-1763 (APQA…LGEE), and 1776-1914 (VNKK…VMAK). Polar residues predominate over residues 512 to 521 (TPHQPSTSDL). A compositionally biased stretch (low complexity) spans 526-540 (PVPGAAPPANMAASA). Basic and acidic residues predominate over residues 558-567 (SFAERAKEGY). Pro residues-rich tracts occupy residues 596–621 (STPP…PPLG) and 671–680 (SSHPPPPPAN). Positions 709-721 (PYASLSAPGASSG) are enriched in low complexity. The segment covering 743–763 (KPPPSPRYSPAPPPATAPPPR) has biased composition (pro residues). Composition is skewed to polar residues over residues 849-860 (MGSSVHQMSQQP) and 1506-1528 (PSYS…SSPE). A compositionally biased stretch (low complexity) spans 1532 to 1543 (GRSSLDSQRSSS). Polar residues predominate over residues 1555–1566 (QEPSTPVESNMY). Over residues 1702-1724 (KAERARKDREADEAFRKAAEADA) the composition is skewed to basic and acidic residues. 2 stretches are compositionally biased toward low complexity: residues 1725–1736 (QKPAPAKKSWFG) and 1798–1809 (GPPSRTASGSSA). Over residues 1810–1827 (APPPPASASPMMPPPSSR) the composition is skewed to pro residues. Positions 1852 to 1866 (IQRSVSTGAAVSTPP) are enriched in polar residues.

Belongs to the SEC16 family.

It localises to the endoplasmic reticulum membrane. Functionally, involved in the initiation of assembly of the COPII coat required for the formation of transport vesicles from the endoplasmic reticulum (ER) and the selection of cargo molecules. Also involved in autophagy. The sequence is that of COPII coat assembly protein sec16 (sec16) from Aspergillus niger (strain ATCC MYA-4892 / CBS 513.88 / FGSC A1513).